The sequence spans 445 residues: Phosphatidate cytidylyltransferase 2 (445 aa).

Residues Met-1 to Val-39 are compositionally biased toward basic and acidic residues. The segment at Met-1 to Pro-52 is disordered. Residue Ser-21 is modified to Phosphoserine. At Thr-31 the chain carries Phosphothreonine. Ser-33, Ser-35, and Ser-37 each carry phosphoserine. At Thr-51 the chain carries Phosphothreonine. The next 6 membrane-spanning stretches (helical) occupy residues Met-79 to Met-99, Phe-132 to Leu-152, His-166 to Val-186, Leu-213 to Ile-233, Gly-262 to Ser-282, and Ile-340 to Phe-360.

This sequence belongs to the CDS family. In terms of assembly, homodimer.

It is found in the endoplasmic reticulum membrane. The catalysed reaction is a 1,2-diacyl-sn-glycero-3-phosphate + CTP + H(+) = a CDP-1,2-diacyl-sn-glycerol + diphosphate. It carries out the reaction 1-octadecanoyl-2-(5Z,8Z,11Z,14Z-eicosatetraenoyl)-sn-glycero-3-phosphate + CTP + H(+) = 1-octadecanoyl-2-(5Z,8Z,11Z,14Z-eicosatetraenoyl)-sn-glycero-3-cytidine-5'-diphosphate + diphosphate. The enzyme catalyses 1-octadecanoyl-2-(9Z,12Z-octadecadienoyl)-sn-glycero-3-phosphate + CTP + H(+) = 1-octadecanoyl-2-(9Z,12Z-octadecadienoyl)-sn-glycero-3-cytidine-5'-diphosphate + diphosphate. It catalyses the reaction 1-hexadecanoyl-2-(5Z,8Z,11Z,14Z-eicosatetraenoyl)-sn-glycero-3-phosphate + CTP + H(+) = 1-hexadecanoyl-2-(5Z,8Z,11Z,14Z-eicosatetraenoyl)-sn-glycero-3-cytidine-5'-diphosphate + diphosphate. The catalysed reaction is 1,2-di-(5Z,8Z,11Z,14Z)-eicosatetraenoyl-sn-glycero-3-phosphate + CTP + H(+) = 1,2-di-(5Z,8Z,11Z,14Z-eicosatetraenoyl)-sn-glycero-3-cytidine-5'-diphosphate + diphosphate. It carries out the reaction 1-octadecanoyl-2-(9Z-octadecenoyl)-sn-glycero-3-phosphate + CTP + H(+) = 1-octadecanoyl-2-(9Z-octadecenoyl)-sn-glycero-3-cytidine-5'-diphosphate + diphosphate. The enzyme catalyses 1-octadecanoyl-2-(4Z,7Z,10Z,13Z,16Z,19Z-docosahexaenoyl)-sn-glycero-3-phosphate + CTP + H(+) = 1-octadecanoyl-2-(4Z,7Z,10Z,13Z,16Z,19Z-docosahexaenoyl)-sn-glycero-3-cytidine-5'-diphosphate + diphosphate. It catalyses the reaction 1,2-di-(9Z,12Z-octadecadienoyl)-sn-glycero-3-phosphate + CTP + H(+) = 1,2-di-(9Z,12Z-octadecadienoyl)-sn-glycero-3-cytidine-5'-diphosphate + diphosphate. The catalysed reaction is 1,2-di-(9Z-octadecenoyl)-sn-glycero-3-phosphate + CTP + H(+) = 1,2-di-(9Z-octadecenoyl)-sn-glycero-3-cytidine-5'-diphosphate + diphosphate. It participates in phospholipid metabolism; CDP-diacylglycerol biosynthesis; CDP-diacylglycerol from sn-glycerol 3-phosphate: step 3/3. Its function is as follows. Catalyzes the conversion of phosphatidic acid (PA) to CDP-diacylglycerol (CDP-DAG), an essential intermediate in the synthesis of phosphatidylglycerol, cardiolipin and phosphatidylinositol. Exhibits specificity for the nature of the acyl chains at the sn-1 and sn-2 positions in the substrate, PA and the preferred acyl chain composition is 1-stearoyl-2-arachidonoyl-sn-phosphatidic acid. Plays an important role in regulating the growth and maturation of lipid droplets which are storage organelles at the center of lipid and energy homeostasis. The polypeptide is Phosphatidate cytidylyltransferase 2 (CDS2) (Bos taurus (Bovine)).